Here is a 668-residue protein sequence, read N- to C-terminus: MLHKAEGFDRRKFTMAGILVAMGVVYGDIGTSPLYVMKAIVGDNGGLARVSESFILGSVSLIFWTLTILTTIKYVVIALNADNHGEGGIFSLYTLVRKKSKYLIIPAMIGGAALLADGVLTPAVTVTTAIEGLRGIPAFFERFGNDQTIIVVITLTIILILFSVQRFGTELVGKAFGPIMFLWFTFLGIIGLMNFSQDWTVIRALNPYYALQLLVSPENKLGLFILGNIFLATTGAEALYSDLGHVGKMNIRISWPYIKICLILNYLGQAAWLLTVKENPEMQALAEINPFFQMIPRGILVFGVVFATIAAVIASQALISGSYTLVSEAIKLKLLPRLKIIYPGSNIGQMYIPAVNLILWLACSAIVLAFRTSTHMEAAYGLSITITMLMTTILLLFYLLDKIPAWSAYLISLFFAAIEVVFFFSSAAKFFHGGYVAVGMAVFLLCIMIIWERGNEIKEATAEQVSLKKYVPQLKALKEDTSVPMYQTNVVFLTSDRVDGEINRNIIYSILDKQPKRANVYWFVNVQVTDEPFTQEYSVDMLGTDFIVQVQLYLGFHISQEVNVYLRQIVHDLMKTGRLPKQPQRYSLTPGREVGDFQFVLIQEELSNVSELKKWDRQIMQAKLAIKNLTTSPESWFGLEYSEVKYESVPLIIGPQRKTHLVERKNRS.

12 helical membrane-spanning segments follow: residues 17–37, 59–79, 104–124, 148–168, 175–195, 221–241, 256–276, 299–319, 350–370, 380–400, 403–423, and 430–450; these read GILVAMGVVYGDIGTSPLYVM, VSLIFWTLTILTTIKYVVIAL, IIPAMIGGAALLADGVLTPAV, TIIVVITLTIILILFSVQRFG, AFGPIMFLWFTFLGIIGLMNF, LGLFILGNIFLATTGAEALYS, PYIKICLILNYLGQAAWLLTV, ILVFGVVFATIAAVIASQALI, MYIPAVNLILWLACSAIVLAF, YGLSITITMLMTTILLLFYLL, IPAWSAYLISLFFAAIEVVFF, and FFHGGYVAVGMAVFLLCIMII.

The protein belongs to the HAK/KUP transporter (TC 2.A.72) family.

The protein localises to the cell membrane. The catalysed reaction is K(+)(in) + H(+)(in) = K(+)(out) + H(+)(out). Its function is as follows. Transport of potassium into the cell. Likely operates as a K(+):H(+) symporter. The sequence is that of Probable potassium transport system protein Kup from Enterococcus faecalis (strain ATCC 700802 / V583).